Reading from the N-terminus, the 206-residue chain is GTP-binding protein YPT1 (206 aa).

Met-1 is modified (N-acetylmethionine). Residues 17-23 (SGVGKSC), 33-40 (YTNDYIST), Gly-66, and 121-124 (NKCD) each bind GTP. Cys-23 is lipidated: S-palmitoyl cysteine. Positions 37-45 (YISTIGVDF) match the Effector region motif. Positions 63–80 (DTAGQERFRTITSSYYRG) are interaction with GDI1. Cys-123 is lipidated: S-palmitoyl cysteine. Lys-144 is covalently cross-linked (Glycyl lysine isopeptide (Lys-Gly) (interchain with G-Cter in ubiquitin)). 152 to 153 (AL) provides a ligand contact to GTP. Ser-172 and Ser-174 each carry phosphoserine. The interval 173–206 (MSQQNLNETTQKKEDKGNVNLKGQSLTNTGGGCC) is disordered. An interaction with GDI1 region spans residues 189-195 (GNVNLKG). Residues Cys-205 and Cys-206 are each lipidated (S-geranylgeranyl cysteine).

It belongs to the small GTPase superfamily. Rab family. As to quaternary structure, forms a complex with the Rab escort protein (REP) MRS6, which is recognized by Rab geranylgeranyltransferase BET2-BET4. Interacts with the Rab GDP dissociation inhibitor GDI1, which can retrieve from and deliver to membranes the GDP-bound and prenylated form of YPT1. Interacts with YIP1, which is required for proper membrane targeting of prenylated YPT1. Interacts with YIF1, YIP3, YIP4 and YIP5. In terms of processing, prenylation is required for interaction with GDI1 and YIP1.

It is found in the endoplasmic reticulum membrane. The protein resides in the golgi apparatus membrane. It localises to the cytoplasm. Its subcellular location is the preautophagosomal structure membrane. Its activity is regulated as follows. Rab activation is generally mediated by a guanine exchange factor (GEF), while inactivation through hydrolysis of bound GTP is catalyzed by a GTPase activating protein (GAP). YPT1 is activated by the GEFs DSS4 and TRAPP complex, and inactivated by GAPs GYP1, GYP5 and GYP8. Its function is as follows. The small GTPases Rab are key regulators of intracellular membrane trafficking, from the formation of transport vesicles to their fusion with membranes. Rabs cycle between an inactive GDP-bound form and an active GTP-bound form that is able to recruit to membranes different set of downstream effectors directly responsible for vesicle formation, movement, tethering and fusion. YPT1 regulates the trafficking of secretory vesicles from the endoplasmic reticulum (ER) to the Golgi. Vesicular transport depends on shuttling of YPT1 between membrane and cytosol by GDI1, probably by recycling it to its membrane of origin after a vesicle fusion event. Plays a role in the initial events of the autophagic vacuole development which take place at specialized regions of the endoplasmic reticulum. Also involved in the recycling of membrane proteins. The sequence is that of GTP-binding protein YPT1 (YPT1) from Saccharomyces cerevisiae (strain ATCC 204508 / S288c) (Baker's yeast).